A 99-amino-acid chain; its full sequence is Small ribosomal subunit protein bS20 (99 aa).

This sequence belongs to the bacterial ribosomal protein bS20 family.

In terms of biological role, binds directly to 16S ribosomal RNA. The protein is Small ribosomal subunit protein bS20 of Synechococcus sp. (strain CC9311).